A 218-amino-acid polypeptide reads, in one-letter code: MSDAGTEEFDEEQGSLGEYEGDRNEAGERHGQGKAVLPRGDTYQGAYENGKRCGQGTYKFKNGARYTGEWYMNLKHGQGVLYYPDGSKYEGSWVDDQRQGHGVYTYPNGDTYDGEWLHHQRHGQGTYTHQETGSQYRGTWVVGNMESTGELIQLNHRYHGNFVNNNPSGPGKYVFDIGCEQHGEYFQLEPDKGEAEEDETLISTTLKWKPKAVTGLSV.

Residues Met1 to Gln13 are compositionally biased toward acidic residues. The segment at Met1–Glu48 is disordered. 6 MORN repeats span residues Tyr19–Thr42, Tyr43–Arg65, Tyr66–Lys88, Tyr89–Thr111, Tyr112–Ser134, and Tyr158–Glu180. Residues Glu20–Gly31 are compositionally biased toward basic and acidic residues.

As to quaternary structure, component of the axonemal radial spoke complexes. Interacts with septin SEPT7. As to expression, testis-specific.

It localises to the cytoplasm. It is found in the cytoskeleton. The protein resides in the cilium axoneme. Its subcellular location is the flagellum basal body. The protein localises to the flagellum axoneme. Functions as part of axonemal radial spoke complexes that play an important part in the motility of sperm and cilia. This Cyprinus carpio (Common carp) protein is Radial spoke head 1 homolog (rsph1).